A 973-amino-acid chain; its full sequence is E3 ubiquitin-protein ligase MIB2 (973 aa).

An MIB/HERC2 1 domain is found at 1–80; that stretch reads MDLDPHAGVQ…AHDLLLYDNA (80 aa). The ZZ-type zinc-finger motif lies at 86–138; sequence HPNIICDCCKKHGLRGMRWKCRVCFDYDLCTQCYMHNKHDLTHAFERYETSHS. Zn(2+)-binding residues include Cys-91, Cys-94, Cys-106, Cys-109, Cys-115, Cys-118, His-124, and His-128. The region spanning 149–227 is the MIB/HERC2 2 domain; the sequence is LPRIPLRGIF…KVDLRCVGEA (79 aa). Residue Ser-251 is modified to Phosphoserine. ANK repeat units follow at residues 480–509, 513–542, 546–575, 579–611, 615–644, 649–679, 683–712, 716–744, and 785–814; these read QGRT…SMDL, EGNT…AVDA, TRST…DVNL, HADT…DVTA, QGFT…QLVD, DGFT…DVNV, KLQS…SVNT, EGDT…DPGP, and RGRS…ERQA. 2 consecutive RING-type zinc fingers follow at residues 850–885 and 929–962; these read CLVC…IRCQ and CPIC…PICR.

In terms of assembly, interacts with actin monomer. Post-translationally, ubiquitinated. Possibly via autoubiquitination. As to expression, highly expressed in brain, heart, liver and kidney.

The protein localises to the cytoplasm. It is found in the endosome. It catalyses the reaction S-ubiquitinyl-[E2 ubiquitin-conjugating enzyme]-L-cysteine + [acceptor protein]-L-lysine = [E2 ubiquitin-conjugating enzyme]-L-cysteine + N(6)-ubiquitinyl-[acceptor protein]-L-lysine.. The protein operates within protein modification; protein ubiquitination. E3 ubiquitin-protein ligase that mediates ubiquitination of Delta receptors, which act as ligands of Notch proteins. Positively regulates the Delta-mediated Notch signaling by ubiquitinating the intracellular domain of Delta, leading to endocytosis of Delta receptors. The chain is E3 ubiquitin-protein ligase MIB2 (Mib2) from Mus musculus (Mouse).